We begin with the raw amino-acid sequence, 376 residues long: Erythronate-4-phosphate dehydrogenase (376 aa).

Substrate-binding residues include Ser-45 and Thr-67. Residues Asp-147, 209–211 (ASR), and Asp-235 contribute to the NAD(+) site. Arg-211 is a catalytic residue. Glu-240 is a catalytic residue. His-257 acts as the Proton donor in catalysis. NAD(+) is bound at residue Gly-260. Residue Tyr-261 participates in substrate binding.

It belongs to the D-isomer specific 2-hydroxyacid dehydrogenase family. PdxB subfamily. In terms of assembly, homodimer.

The protein localises to the cytoplasm. The catalysed reaction is 4-phospho-D-erythronate + NAD(+) = (R)-3-hydroxy-2-oxo-4-phosphooxybutanoate + NADH + H(+). It functions in the pathway cofactor biosynthesis; pyridoxine 5'-phosphate biosynthesis; pyridoxine 5'-phosphate from D-erythrose 4-phosphate: step 2/5. In terms of biological role, catalyzes the oxidation of erythronate-4-phosphate to 3-hydroxy-2-oxo-4-phosphonooxybutanoate. This Aeromonas hydrophila subsp. hydrophila (strain ATCC 7966 / DSM 30187 / BCRC 13018 / CCUG 14551 / JCM 1027 / KCTC 2358 / NCIMB 9240 / NCTC 8049) protein is Erythronate-4-phosphate dehydrogenase.